The following is a 441-amino-acid chain: ATP-dependent protease ATPase subunit HslU (441 aa).

Residues Ile18, 60-65 (GVGKTE), Asp254, Glu319, and Arg391 each bind ATP.

This sequence belongs to the ClpX chaperone family. HslU subfamily. As to quaternary structure, a double ring-shaped homohexamer of HslV is capped on each side by a ring-shaped HslU homohexamer. The assembly of the HslU/HslV complex is dependent on binding of ATP.

Its subcellular location is the cytoplasm. Functionally, ATPase subunit of a proteasome-like degradation complex; this subunit has chaperone activity. The binding of ATP and its subsequent hydrolysis by HslU are essential for unfolding of protein substrates subsequently hydrolyzed by HslV. HslU recognizes the N-terminal part of its protein substrates and unfolds these before they are guided to HslV for hydrolysis. This is ATP-dependent protease ATPase subunit HslU from Shewanella piezotolerans (strain WP3 / JCM 13877).